The primary structure comprises 273 residues: 4-hydroxy-tetrahydrodipicolinate reductase (273 aa).

Residues 12 to 17 (GAGGRM) and Glu38 contribute to the NAD(+) site. Residue Arg39 coordinates NADP(+). NAD(+)-binding positions include 102–104 (GTT) and 126–129 (AANF). His159 serves as the catalytic Proton donor/acceptor. His160 lines the (S)-2,3,4,5-tetrahydrodipicolinate pocket. Lys163 acts as the Proton donor in catalysis. 169–170 (GT) is a (S)-2,3,4,5-tetrahydrodipicolinate binding site.

It belongs to the DapB family. As to quaternary structure, homotetramer.

Its subcellular location is the cytoplasm. The catalysed reaction is (S)-2,3,4,5-tetrahydrodipicolinate + NAD(+) + H2O = (2S,4S)-4-hydroxy-2,3,4,5-tetrahydrodipicolinate + NADH + H(+). It carries out the reaction (S)-2,3,4,5-tetrahydrodipicolinate + NADP(+) + H2O = (2S,4S)-4-hydroxy-2,3,4,5-tetrahydrodipicolinate + NADPH + H(+). The protein operates within amino-acid biosynthesis; L-lysine biosynthesis via DAP pathway; (S)-tetrahydrodipicolinate from L-aspartate: step 4/4. Catalyzes the conversion of 4-hydroxy-tetrahydrodipicolinate (HTPA) to tetrahydrodipicolinate. The protein is 4-hydroxy-tetrahydrodipicolinate reductase of Shigella boydii serotype 18 (strain CDC 3083-94 / BS512).